The following is a 216-amino-acid chain: Major fimbrial subunit (216 aa).

Residues 1-20 (MKKTLLGSLILLAFAGNVQA) form the signal peptide. A disulfide bridge links Cys41 with Cys81.

Belongs to the fimbrial protein family.

The protein resides in the fimbrium. Mediates adherence to oropharyngeal epithelial cells. Helps the airway colonization process. In Haemophilus influenzae, this protein is Major fimbrial subunit (hifA).